Reading from the N-terminus, the 166-residue chain is Lithostathine-1-beta (166 aa).

The signal sequence occupies residues 1-22 (MAQTNSFFMLISSLMFLSLSQG). A glycan (O-linked (GalNAc...) threonine) is linked at threonine 27. Residues 34 to 164 (ISCPEGTNAY…EKKFSFVCKF (131 aa)) form the C-type lectin domain. 3 disulfides stabilise this stretch: cysteine 36–cysteine 47, cysteine 64–cysteine 162, and cysteine 137–cysteine 154.

In terms of processing, all O-linked glycans consist of Gal-GlcNAc-Gal-GalNAc tetrasaccharide core and get elongated (microheterogeneity).

It is found in the secreted. Might act as an inhibitor of spontaneous calcium carbonate precipitation. May be associated with neuronal sprouting in brain, and with brain and pancreas regeneration. The chain is Lithostathine-1-beta (REG1B) from Homo sapiens (Human).